Consider the following 177-residue polypeptide: MELEQLLNSVPEYAKDLKLNMGGVLRQTELTEQQAWGTAVACAIAARNPQLRESVLGEAAKHLNEQALFAAKAAASVMGMNNIFYRFRHLSTNPKYGAMPARLRMQVIAKHGSDPIDFELWCLAVSAMNGCGVCVDSHENVLREKGVSEEAVLAAIRIASTIHGLAAILDVEADPIA.

Cysteine 131 functions as the Proton donor in the catalytic mechanism. Cysteines 131 and 134 form a disulfide. The active-site Cysteine sulfenic acid (-SOH) intermediate is the cysteine 134.

It belongs to the AhpD family.

It carries out the reaction N(6)-[(R)-dihydrolipoyl]-L-lysyl-[lipoyl-carrier protein] + a hydroperoxide = N(6)-[(R)-lipoyl]-L-lysyl-[lipoyl-carrier protein] + an alcohol + H2O. Its function is as follows. Antioxidant protein with alkyl hydroperoxidase activity. Required for the reduction of the AhpC active site cysteine residues and for the regeneration of the AhpC enzyme activity. The polypeptide is Alkyl hydroperoxide reductase AhpD (Solibacter usitatus (strain Ellin6076)).